The sequence spans 393 residues: Reticulon-like protein 2 (393 aa).

The segment covering 1–21 (MNRNTTTNKNANLNNSRNANA) has biased composition (low complexity). A disordered region spans residues 1-25 (MNRNTTTNKNANLNNSRNANAPGEA). Topologically, residues 1–60 (MNRNTTTNKNANLNNSRNANAPGEAGHQNKTGLIYWTNPSKSGASFAATLVSLLILRNVN) are cytoplasmic. The Reticulon domain occupies 30-236 (KTGLIYWTNP…SISNENKSST (207 aa)). A helical transmembrane segment spans residues 61-81 (VISVLLKIGYMVLFTSFAVEL). The Lumenal portion of the chain corresponds to 82–149 (STKVLFDKGV…IGVSLYFLHG (68 aa)). Asn137 carries an N-linked (GlcNAc...) asparagine glycan. The helical transmembrane segment at 150 to 170 (LFAIFSMNTVLIMTTIFLYTV) threads the bilayer. At 171 to 393 (PLIYDRKQAR…HGLKQKLQHA (223 aa)) the chain is on the cytoplasmic side. 2 disordered regions span residues 214–313 (IIPP…DVKT) and 339–393 (GDYN…LQHA). Residues 220–285 (DEGSYSTSIS…PVSQNENIGT (66 aa)) are compositionally biased toward polar residues. A Phosphoserine modification is found at Ser278. The segment covering 289–313 (GKQEIPTEKDFNNRHENFSKPDVKT) has biased composition (basic and acidic residues). Residues 365 to 376 (PAESQSIPIKNN) show a composition bias toward polar residues. The span at 381-393 (KTTHGLKQKLQHA) shows a compositional bias: basic residues.

The protein resides in the endoplasmic reticulum membrane. The chain is Reticulon-like protein 2 (RTN2) from Saccharomyces cerevisiae (strain ATCC 204508 / S288c) (Baker's yeast).